The primary structure comprises 124 residues: Small ribosomal subunit protein uS13 (124 aa).

A disordered region spans residues 95-124 (GLPVRGQRTKTNARTRKGPKRTVAGKKKAR).

The protein belongs to the universal ribosomal protein uS13 family. In terms of assembly, part of the 30S ribosomal subunit. Forms a loose heterodimer with protein S19. Forms two bridges to the 50S subunit in the 70S ribosome.

In terms of biological role, located at the top of the head of the 30S subunit, it contacts several helices of the 16S rRNA. In the 70S ribosome it contacts the 23S rRNA (bridge B1a) and protein L5 of the 50S subunit (bridge B1b), connecting the 2 subunits; these bridges are implicated in subunit movement. Contacts the tRNAs in the A and P-sites. The polypeptide is Small ribosomal subunit protein uS13 (Leifsonia xyli subsp. xyli (strain CTCB07)).